A 644-amino-acid chain; its full sequence is Threonine--tRNA ligase (644 aa).

Residues 1 to 61 (MINVTLPDGS…DGDAQVAIIT (61 aa)) form the TGS domain. The catalytic stretch occupies residues 243–536 (DHRKLGKQME…LIESYAGKLP (294 aa)). Residues Cys336, His387, and His513 each contribute to the Zn(2+) site.

Belongs to the class-II aminoacyl-tRNA synthetase family. As to quaternary structure, homodimer. Requires Zn(2+) as cofactor.

The protein localises to the cytoplasm. The catalysed reaction is tRNA(Thr) + L-threonine + ATP = L-threonyl-tRNA(Thr) + AMP + diphosphate + H(+). Catalyzes the attachment of threonine to tRNA(Thr) in a two-step reaction: L-threonine is first activated by ATP to form Thr-AMP and then transferred to the acceptor end of tRNA(Thr). Also edits incorrectly charged L-seryl-tRNA(Thr). The polypeptide is Threonine--tRNA ligase (Maricaulis maris (strain MCS10) (Caulobacter maris)).